The chain runs to 189 residues: Interferon alpha-6 (189 aa).

The signal sequence occupies residues 1–23 (MARLCAFLMVLAVLSYWPTCSLG). Cystine bridges form between C24–C122 and C52–C162. Residue N101 is glycosylated (N-linked (GlcNAc...) asparagine).

It belongs to the alpha/beta interferon family.

It is found in the secreted. Its function is as follows. Produced by macrophages, IFN-alpha have antiviral activities. Interferon stimulates the production of two enzymes: a protein kinase and an oligoadenylate synthetase. This is Interferon alpha-6 (Ifna6) from Mus musculus (Mouse).